The chain runs to 351 residues: Probable NADP-dependent isopropanol dehydrogenase (351 aa).

Cys-37, His-59, Glu-60, and Asp-150 together coordinate Zn(2+). Residues 175 to 178 (AGPV), 198 to 200 (DSR), 265 to 267 (VNY), and Lys-340 contribute to the NADP(+) site.

Belongs to the zinc-containing alcohol dehydrogenase family. Zn(2+) serves as cofactor.

The catalysed reaction is propan-2-ol + NADP(+) = acetone + NADPH + H(+). Its function is as follows. Alcohol dehydrogenase with a preference for medium chain secondary alcohols, such as 2-butanol and isopropanol. Has very low activity with primary alcohols, such as ethanol. Under physiological conditions, the enzyme reduces aldehydes and 2-ketones to produce secondary alcohols. Is also active with acetaldehyde and propionaldehyde. In Mycoplasma pneumoniae (strain ATCC 29342 / M129 / Subtype 1) (Mycoplasmoides pneumoniae), this protein is Probable NADP-dependent isopropanol dehydrogenase (adh).